The chain runs to 99 residues: Putative pterin-4-alpha-carbinolamine dehydratase (99 aa).

It belongs to the pterin-4-alpha-carbinolamine dehydratase family.

It catalyses the reaction (4aS,6R)-4a-hydroxy-L-erythro-5,6,7,8-tetrahydrobiopterin = (6R)-L-erythro-6,7-dihydrobiopterin + H2O. The chain is Putative pterin-4-alpha-carbinolamine dehydratase from Synechococcus sp. (strain CC9311).